Consider the following 796-residue polypeptide: Merozoite surface protein P92 (796 aa).

The signal sequence occupies residues 1–26 (MFAVNLKICIFLSLVSFLLQCKNTLA). Asn27, Asn37, Asn65, Asn71, Asn168, Asn240, Asn275, Asn359, Asn502, Asn511, Asn607, Asn633, Asn728, and Asn765 each carry an N-linked (GlcNAc...) asparagine glycan. The 6-Cys domain occupies 571–720 (KYEGIDLTDS…NSIKQEINKK (150 aa)). Cystine bridges form between Cys614-Cys691 and Cys625-Cys689.

In terms of assembly, interacts with host complement factor CFH isoform 1 (via sushi 4-6 domains) and CFH isoform FHL-1 (via sushi 4-6 domains); this interaction recruits CFH onto the merozoite surface preventing complement-mediated cell lysis. The interaction does not affect CFH activity.

It is found in the cell surface. It localises to the cell membrane. Functionally, during the asexual blood stage, recruits host complement factor H CFH to the surface of merozoites resulting in the down-regulation of the host complement alternative pathway and thus, protecting merozoites from complement-mediated lysis. The protein is Merozoite surface protein P92 of Plasmodium falciparum (isolate 3D7).